The following is a 51-amino-acid chain: Large ribosomal subunit protein bL33 (51 aa).

The protein belongs to the bacterial ribosomal protein bL33 family.

In Francisella tularensis subsp. tularensis (strain FSC 198), this protein is Large ribosomal subunit protein bL33.